The chain runs to 73 residues: Translation initiation factor IF-1 (73 aa).

The region spanning 1-72 (MAKEDVIEVE…SRGRITYRYR (72 aa)) is the S1-like domain.

The protein belongs to the IF-1 family. Component of the 30S ribosomal translation pre-initiation complex which assembles on the 30S ribosome in the order IF-2 and IF-3, IF-1 and N-formylmethionyl-tRNA(fMet); mRNA recruitment can occur at any time during PIC assembly.

It localises to the cytoplasm. In terms of biological role, one of the essential components for the initiation of protein synthesis. Stabilizes the binding of IF-2 and IF-3 on the 30S subunit to which N-formylmethionyl-tRNA(fMet) subsequently binds. Helps modulate mRNA selection, yielding the 30S pre-initiation complex (PIC). Upon addition of the 50S ribosomal subunit IF-1, IF-2 and IF-3 are released leaving the mature 70S translation initiation complex. This is Translation initiation factor IF-1 from Rubrobacter xylanophilus (strain DSM 9941 / JCM 11954 / NBRC 16129 / PRD-1).